The sequence spans 112 residues: Large ribosomal subunit protein eL33w (112 aa).

This sequence belongs to the eukaryotic ribosomal protein eL33 family.

The protein is Large ribosomal subunit protein eL33w (RPL35AA) of Arabidopsis thaliana (Mouse-ear cress).